The sequence spans 154 residues: Small ribosomal subunit protein uS9 (154 aa).

Disordered regions lie at residues 1 to 33 (MVPP…SGLG) and 115 to 154 (PENN…YSKR). Residues 135-154 (KERKKAGLKKARKAPQYSKR) show a composition bias toward basic residues.

This sequence belongs to the universal ribosomal protein uS9 family.

This chain is Small ribosomal subunit protein uS9, found in Tropheryma whipplei (strain TW08/27) (Whipple's bacillus).